We begin with the raw amino-acid sequence, 177 residues long: RNA polymerase sigma-E factor (177 aa).

A Polymerase core binding motif is present at residues 34-47 (DLLQTALARTYGRW). Positions 128–147 (TEETAAALGMSAGTVKSTLH) form a DNA-binding region, H-T-H motif.

Belongs to the sigma-70 factor family. ECF subfamily.

It localises to the cytoplasm. Its function is as follows. Sigma factors are initiation factors that promote the attachment of RNA polymerase to specific initiation sites and are then released. This sigma factor is required for normal cell wall integrity; it is recruited by RNA polymerase to transcribe genes with cell wall-related functions. It is also involved in the transcription of the dagA gene coding for an extracellular agar-degrading enzyme. The polypeptide is RNA polymerase sigma-E factor (sigE) (Streptomyces coelicolor (strain ATCC BAA-471 / A3(2) / M145)).